Here is a 257-residue protein sequence, read N- to C-terminus: Type III pantothenate kinase (257 aa).

7-14 (DIGNSHTV) is an ATP binding site. 106–109 (GTDR) contacts substrate. Aspartate 108 serves as the catalytic Proton acceptor. Position 128 (aspartate 128) interacts with K(+). Threonine 132 contributes to the ATP binding site. Substrate is bound at residue threonine 184.

It belongs to the type III pantothenate kinase family. As to quaternary structure, homodimer. The cofactor is NH4(+). K(+) serves as cofactor.

The protein resides in the cytoplasm. It catalyses the reaction (R)-pantothenate + ATP = (R)-4'-phosphopantothenate + ADP + H(+). The protein operates within cofactor biosynthesis; coenzyme A biosynthesis; CoA from (R)-pantothenate: step 1/5. Catalyzes the phosphorylation of pantothenate (Pan), the first step in CoA biosynthesis. This Nocardioides sp. (strain ATCC BAA-499 / JS614) protein is Type III pantothenate kinase.